Consider the following 365-residue polypeptide: Aminomethyltransferase (365 aa).

The protein belongs to the GcvT family. The glycine cleavage system is composed of four proteins: P, T, L and H.

It catalyses the reaction N(6)-[(R)-S(8)-aminomethyldihydrolipoyl]-L-lysyl-[protein] + (6S)-5,6,7,8-tetrahydrofolate = N(6)-[(R)-dihydrolipoyl]-L-lysyl-[protein] + (6R)-5,10-methylene-5,6,7,8-tetrahydrofolate + NH4(+). Its function is as follows. The glycine cleavage system catalyzes the degradation of glycine. The sequence is that of Aminomethyltransferase from Desulfitobacterium hafniense (strain Y51).